Here is an 876-residue protein sequence, read N- to C-terminus: Exosome complex component 10 homolog (876 aa).

The tract at residues 1-22 (MSGEESMPDEEQKQSEEEEEMI) is disordered. Residues 279–445 (TMIDTKEKLE…YSYDMLREQL (167 aa)) enclose the 3'-5' exonuclease domain. Positions 303, 305, 361, and 430 each coordinate Mg(2+). Positions 489-569 (NTRQDYALTH…VEARDVKLEK (81 aa)) constitute an HRDC domain. 3 stretches are compositionally biased toward basic and acidic residues: residues 690–730 (EKQE…EFDA), 741–752 (VPDDPNKPKDPE), and 834–847 (KPVRDNNADFDPFH). The disordered stretch occupies residues 690 to 876 (EKQEEEERKE…NRQGTINYKK (187 aa)). Residues 848 to 861 (QKYRLKNKTKKNMA) are compositionally biased toward basic residues.

It belongs to the exosome component 10/RRP6 family. In terms of assembly, component of the RNA exosome complex. Interacts with crn-5. Requires Mg(2+) as cofactor. Ubiquitously expressed.

The protein resides in the nucleus. It localises to the nucleolus. The protein localises to the nucleoplasm. Catalytic component of the RNA exosome complex which has 3'-&gt;5' exoribonuclease activity and participates in a multitude of cellular RNA processing and degradation events. Involved in apoptotic DNA degradation. Involved in regulation of antisense ribosomal siRNA production. Involved in response to cold-warm shock. This Caenorhabditis elegans protein is Exosome complex component 10 homolog.